A 630-amino-acid chain; its full sequence is Probable potassium transport system protein Kup 2 (630 aa).

Transmembrane regions (helical) follow at residues 14–34 (ATGF…DIGT), 56–76 (VIVL…VTAK), 108–128 (VPLL…SMIT), 145–165 (PALQ…LFAF), 176–196 (AFGP…LLHI), 214–234 (FMLS…LAVT), 255–275 (WLFF…AMVL), 293–313 (LLVP…QAVI), 352–372 (MLLL…SALA), 375–395 (YGIA…VVVW), 402–422 (PAAA…FFSA), and 427–447 (LMEG…LVWT).

It belongs to the HAK/KUP transporter (TC 2.A.72) family.

The protein resides in the cell inner membrane. It carries out the reaction K(+)(in) + H(+)(in) = K(+)(out) + H(+)(out). Functionally, transport of potassium into the cell. Likely operates as a K(+):H(+) symporter. In Rhodopseudomonas palustris (strain BisA53), this protein is Probable potassium transport system protein Kup 2.